The following is a 438-amino-acid chain: MTETTEAKVDAAQTAALELANESDEARQENLQAIADAIDERRAEVLEANEKDVEAAEEMLEAGEYSQALVDRLKLSDAKLDSIIEMVRSVAGQEDPLGKTLTARELDDGLDLYKVSVPIGVIGTVFESRPDALVQIAALSLRSGNAVILKGGSEASHSNRVLYEIIREATADLPDGWAQLIEAREDVDRLLGMDDSVDLLMPRGSSAFVSYIQDNTSIPVLGHTEGVCHVYVDDAADLDMATDIAYDAKVQYPAVCNAVETLLVHEDVAEEYLPDIAARYAEADVEMRGDEATRSVLDRDIEAATDDDWTSEYGDLIVAIKVVDSLESAIDHINTNGSKHTESIVTEDDGRASTFMRRLDSASVFHNASTRFSDGYRFGLGAEVGISTGKIHARGPVGLKGLTTYKYHLEGDGHLVATYAGEDAKPFSHEEFDGEWSP.

Belongs to the gamma-glutamyl phosphate reductase family.

It is found in the cytoplasm. It carries out the reaction L-glutamate 5-semialdehyde + phosphate + NADP(+) = L-glutamyl 5-phosphate + NADPH + H(+). It functions in the pathway amino-acid biosynthesis; L-proline biosynthesis; L-glutamate 5-semialdehyde from L-glutamate: step 2/2. Functionally, catalyzes the NADPH-dependent reduction of L-glutamate 5-phosphate into L-glutamate 5-semialdehyde and phosphate. The product spontaneously undergoes cyclization to form 1-pyrroline-5-carboxylate. The polypeptide is Gamma-glutamyl phosphate reductase (Natronomonas pharaonis (strain ATCC 35678 / DSM 2160 / CIP 103997 / JCM 8858 / NBRC 14720 / NCIMB 2260 / Gabara) (Halobacterium pharaonis)).